The primary structure comprises 340 residues: DNA-directed RNA polymerase subunit alpha (340 aa).

The tract at residues 1-235 (MYRNWTELIK…DQLNPFINFD (235 aa)) is alpha N-terminal domain (alpha-NTD). The interval 251–340 (WNPNLFRKVD…LSKQFEEENF (90 aa)) is alpha C-terminal domain (alpha-CTD).

It belongs to the RNA polymerase alpha chain family. In terms of assembly, homodimer. The RNAP catalytic core consists of 2 alpha, 1 beta, 1 beta' and 1 omega subunit. When a sigma factor is associated with the core the holoenzyme is formed, which can initiate transcription.

The catalysed reaction is RNA(n) + a ribonucleoside 5'-triphosphate = RNA(n+1) + diphosphate. Its function is as follows. DNA-dependent RNA polymerase catalyzes the transcription of DNA into RNA using the four ribonucleoside triphosphates as substrates. The protein is DNA-directed RNA polymerase subunit alpha of Magnetococcus marinus (strain ATCC BAA-1437 / JCM 17883 / MC-1).